We begin with the raw amino-acid sequence, 1390 residues long: DNA-directed RNA polymerase subunit beta' (1390 aa).

C70, C72, C85, and C88 together coordinate Zn(2+). Residues D460, D462, and D464 each coordinate Mg(2+). Residues C814, C888, C895, and C898 each contribute to the Zn(2+) site.

Belongs to the RNA polymerase beta' chain family. In terms of assembly, the RNAP catalytic core consists of 2 alpha, 1 beta, 1 beta' and 1 omega subunit. When a sigma factor is associated with the core the holoenzyme is formed, which can initiate transcription. Mg(2+) is required as a cofactor. The cofactor is Zn(2+).

The enzyme catalyses RNA(n) + a ribonucleoside 5'-triphosphate = RNA(n+1) + diphosphate. DNA-dependent RNA polymerase catalyzes the transcription of DNA into RNA using the four ribonucleoside triphosphates as substrates. The polypeptide is DNA-directed RNA polymerase subunit beta' (Pseudoalteromonas translucida (strain TAC 125)).